The sequence spans 328 residues: MSLIKIDQKAYEYNLRHIAKKIGSFQRLICVFKDNAYGHGAKLLAPLAKNLGVSFVAVKSEEEAREIEEFFENILILSHRPHGNENSRFIYALNDISQVKNYKQDIKIHLKIDTGMHRNGICVENLEHAINLIQGSDLKLTGMFTHFASADEMDGSFFVQKENFQKAKKIVKKYFSNLLFHSYNSAALFRGKIPEDEYCRVGLVQFGYGDSNLKRVLSLYAHRLSQRILQKGQSIGYGGIFTAAKDMEVATYDLGYADGLFRYNGRGELVLGNGKAMLGKMSMDSFSCENSGEEICVFKDADIWADFFHTINYEILVKLNPNIQRVLV.

The Proton acceptor; specific for D-alanine role is filled by lysine 33. An N6-(pyridoxal phosphate)lysine modification is found at lysine 33. Position 118 (arginine 118) interacts with substrate. Tyrosine 237 serves as the catalytic Proton acceptor; specific for L-alanine. A substrate-binding site is contributed by methionine 283.

The protein belongs to the alanine racemase family. Pyridoxal 5'-phosphate serves as cofactor.

It carries out the reaction L-alanine = D-alanine. It functions in the pathway amino-acid biosynthesis; D-alanine biosynthesis; D-alanine from L-alanine: step 1/1. Catalyzes the interconversion of L-alanine and D-alanine. May also act on other amino acids. This chain is Alanine racemase (alr), found in Campylobacter jejuni subsp. jejuni serotype O:2 (strain ATCC 700819 / NCTC 11168).